A 277-amino-acid chain; its full sequence is Phosphatidylglycerol--prolipoprotein diacylglyceryl transferase (277 aa).

4 helical membrane-spanning segments follow: residues 18 to 38 (ISVKWYGVIIASAVVIALLLA), 51 to 71 (IIVDLLIWAIPISIISARIYY), 89 to 109 (IWHGGIAIYGALIGAVLTAII), and 116 to 136 (ISFWQLADVVAPSLIIAQAIG). An a 1,2-diacyl-sn-glycero-3-phospho-(1'-sn-glycerol)-binding site is contributed by Arg137. 3 consecutive transmembrane segments (helical) span residues 177–197 (QPTFLYESLWNVLGFIVLLII), 205–225 (GELFLGYVIWYSFGRFFIEGM), and 235–255 (FRVSQVLSLLLIVLSIGIIIY).

The protein belongs to the Lgt family.

The protein localises to the cell membrane. It catalyses the reaction L-cysteinyl-[prolipoprotein] + a 1,2-diacyl-sn-glycero-3-phospho-(1'-sn-glycerol) = an S-1,2-diacyl-sn-glyceryl-L-cysteinyl-[prolipoprotein] + sn-glycerol 1-phosphate + H(+). Its pathway is protein modification; lipoprotein biosynthesis (diacylglyceryl transfer). In terms of biological role, catalyzes the transfer of the diacylglyceryl group from phosphatidylglycerol to the sulfhydryl group of the N-terminal cysteine of a prolipoprotein, the first step in the formation of mature lipoproteins. The protein is Phosphatidylglycerol--prolipoprotein diacylglyceryl transferase of Listeria monocytogenes serotype 4b (strain CLIP80459).